An 813-amino-acid chain; its full sequence is Homeobox-leucine zipper protein ROC4 (813 aa).

Residues E62 to T112 are disordered. Basic residues predominate over residues P101–T112. A DNA-binding region (homeobox) is located at residues R104–L163. Residues F152–N191 adopt a coiled-coil conformation. One can recognise an START domain in the interval A306–L559.

The protein belongs to the HD-ZIP homeobox family. Class IV subfamily.

Its subcellular location is the nucleus. Its function is as follows. Probable transcription factor. In Oryza sativa subsp. japonica (Rice), this protein is Homeobox-leucine zipper protein ROC4 (ROC4).